A 357-amino-acid polypeptide reads, in one-letter code: Hydroxyproline O-arabinosyltransferase RDN1 (357 aa).

The chain crosses the membrane as a helical; Signal-anchor span at residues 13-33 (LLMLLMVLGFSFATYNLVFMM).

In terms of tissue distribution, expressed in the vasculature of leaves, petioles, stems and roots. Expressed in the vascular cylinder throughout the root, and nodule vasculature.

Its subcellular location is the golgi apparatus membrane. The enzyme catalyses trans-4-hydroxy-L-prolyl-[protein] + UDP-beta-L-arabinofuranose = O-(beta-L-arabinofuranosyl)-trans-4-hydroxy-L-prolyl-[protein] + UDP + H(+). Probable glycosyltransferase involved in the O-arabinosylation of several proteins including extensins and small signaling peptides. Catalyzes the transfer of the initial L-arabinose to the hydroxyl group of Hyp residues. Probably involved in the arabinosylation of CLE12, a signaling peptide that moves from root to shoot, to interact with SUNN receptor kinase signaling that regulates nodulation. Involved in long distance nodulation signaling events. Involved in the autoregulation of nodulation (AON), a long distance systemic signaling from root to shoot and back again, which allows legumes to limit the number of root nodules formed based on available nitrogen and previous rhizobial colonization. Functions in the root, upstream of the shoot receptor kinase SUNN and via CLE peptide, to control AON. The chain is Hydroxyproline O-arabinosyltransferase RDN1 from Medicago truncatula (Barrel medic).